Here is a 664-residue protein sequence, read N- to C-terminus: Threonine--tRNA ligase (664 aa).

The 64-residue stretch at 1–64 (MSELLKITLP…TADAQLALVT (64 aa)) folds into the TGS domain. The catalytic stretch occupies residues 250 to 559 (DHRKLGNEMD…LIEHFAGRLP (310 aa)). Residues Cys-355, His-406, and His-536 each contribute to the Zn(2+) site.

It belongs to the class-II aminoacyl-tRNA synthetase family. As to quaternary structure, homodimer. Zn(2+) is required as a cofactor.

It localises to the cytoplasm. It carries out the reaction tRNA(Thr) + L-threonine + ATP = L-threonyl-tRNA(Thr) + AMP + diphosphate + H(+). Its function is as follows. Catalyzes the attachment of threonine to tRNA(Thr) in a two-step reaction: L-threonine is first activated by ATP to form Thr-AMP and then transferred to the acceptor end of tRNA(Thr). Also edits incorrectly charged L-seryl-tRNA(Thr). The protein is Threonine--tRNA ligase of Novosphingobium aromaticivorans (strain ATCC 700278 / DSM 12444 / CCUG 56034 / CIP 105152 / NBRC 16084 / F199).